We begin with the raw amino-acid sequence, 130 residues long: MHAPQPAPSPPGAAATGEAAEDRALRYLQARGLSVIARNYRCKTGEIDLVMRDVAGTLVFVEVRARVARSAQRFGGAAASVTPAKQRRLIAAAEDFLAGHPGEVPACRFDVIAIDGTRIEWMRDAFGVEA.

Belongs to the UPF0102 family.

The chain is UPF0102 protein RSc3265 from Ralstonia nicotianae (strain ATCC BAA-1114 / GMI1000) (Ralstonia solanacearum).